The sequence spans 253 residues: Phosphoribosylaminoimidazole-succinocarboxamide synthase (253 aa).

Belongs to the SAICAR synthetase family.

The enzyme catalyses 5-amino-1-(5-phospho-D-ribosyl)imidazole-4-carboxylate + L-aspartate + ATP = (2S)-2-[5-amino-1-(5-phospho-beta-D-ribosyl)imidazole-4-carboxamido]succinate + ADP + phosphate + 2 H(+). The protein operates within purine metabolism; IMP biosynthesis via de novo pathway; 5-amino-1-(5-phospho-D-ribosyl)imidazole-4-carboxamide from 5-amino-1-(5-phospho-D-ribosyl)imidazole-4-carboxylate: step 1/2. The polypeptide is Phosphoribosylaminoimidazole-succinocarboxamide synthase (Parvibaculum lavamentivorans (strain DS-1 / DSM 13023 / NCIMB 13966)).